The following is an 803-amino-acid chain: Translation initiation factor IF-2 (803 aa).

2 disordered regions span residues 95 to 125 (PVVE…EKAE) and 138 to 209 (EVKE…KLEQ). Residues 111 to 121 (VPLTSDTTNLN) are compositionally biased toward polar residues. Residues 138 to 155 (EVKEEAKKTPSEKKETPK) show a composition bias toward basic and acidic residues. Positions 156 to 167 (KGPRKETRRSRK) are enriched in basic residues. Positions 168-188 (PDKEDKWEREELHMTKLVEER) are enriched in basic and acidic residues. One can recognise a tr-type G domain in the interval 302–471 (PRAPVVTIMG…LLQAEVLELK (170 aa)). A G1 region spans residues 311-318 (GHVDHGKT). 311–318 (GHVDHGKT) provides a ligand contact to GTP. The interval 336 to 340 (GITQH) is G2. The interval 357 to 360 (DTPG) is G3. Residues 357–361 (DTPGH) and 411–414 (NKID) each bind GTP. The interval 411–414 (NKID) is G4. Positions 447–449 (SAK) are G5.

The protein belongs to the TRAFAC class translation factor GTPase superfamily. Classic translation factor GTPase family. IF-2 subfamily.

It localises to the cytoplasm. Functionally, one of the essential components for the initiation of protein synthesis. Protects formylmethionyl-tRNA from spontaneous hydrolysis and promotes its binding to the 30S ribosomal subunits. Also involved in the hydrolysis of GTP during the formation of the 70S ribosomal complex. The chain is Translation initiation factor IF-2 from Coxiella burnetii (strain CbuG_Q212) (Coxiella burnetii (strain Q212)).